The chain runs to 585 residues: Arginine--tRNA ligase (585 aa).

The 'HIGH' region motif lies at 131–141 (ANPTGPMHVGH).

The protein belongs to the class-I aminoacyl-tRNA synthetase family. As to quaternary structure, monomer.

Its subcellular location is the cytoplasm. The enzyme catalyses tRNA(Arg) + L-arginine + ATP = L-arginyl-tRNA(Arg) + AMP + diphosphate. This chain is Arginine--tRNA ligase, found in Rhizobium meliloti (strain 1021) (Ensifer meliloti).